We begin with the raw amino-acid sequence, 744 residues long: NAD(P)H-quinone oxidoreductase subunit 5, chloroplastic (744 aa).

Transmembrane regions (helical) follow at residues 9–29 (WIIPFLPLPVPMLIGLGLLLF), 40–60 (WAFQSVLLLSIVMIFSMNLSI), 89–109 (IDPLTSIMSILITTVGIMVLI), 125–145 (FAYMSFFSTSMLGLVTSSNLI), 147–167 (IYIFWELVGICSYLLIGFWFT), 185–205 (GDFGLLLGILGFYWITGSFEF), 219–239 (NEVNLLFVTLCAVLLFAGAIA), 258–278 (TPISALIHAATMVAAGIFLVA), 290–312 (IMNFISLIGIITVFLGATLALAQ), 327–347 (LGYMMLALGMGSYRSALFHLI), 354–374 (ALLFLGSGSVIHSMETLVGYC), 396–416 (TSFLLGTLSLCGIPPLACFWS), 425–445 (WLYSPIFAIIAWSTAGLTAFY), 549–569 (LFPILILVLFTLFVGFLGIPF), 608–628 (VFSVTISSFGIFIAFFLYKPV), and 724–744 (YLFFYFSYVSIFLVIYYFLNF).

The protein belongs to the complex I subunit 5 family. As to quaternary structure, NDH is composed of at least 16 different subunits, 5 of which are encoded in the nucleus.

The protein resides in the plastid. Its subcellular location is the chloroplast thylakoid membrane. The catalysed reaction is a plastoquinone + NADH + (n+1) H(+)(in) = a plastoquinol + NAD(+) + n H(+)(out). It catalyses the reaction a plastoquinone + NADPH + (n+1) H(+)(in) = a plastoquinol + NADP(+) + n H(+)(out). NDH shuttles electrons from NAD(P)H:plastoquinone, via FMN and iron-sulfur (Fe-S) centers, to quinones in the photosynthetic chain and possibly in a chloroplast respiratory chain. The immediate electron acceptor for the enzyme in this species is believed to be plastoquinone. Couples the redox reaction to proton translocation, and thus conserves the redox energy in a proton gradient. The protein is NAD(P)H-quinone oxidoreductase subunit 5, chloroplastic (ndhF) of Adenocaulon himalaicum (Trailplant).